Here is a 226-residue protein sequence, read N- to C-terminus: Enolase-phosphatase E1 (226 aa).

Mg(2+) is bound by residues aspartate 9 and glutamate 11. Residues 115 to 116 and lysine 160 each bind substrate; that span reads SS. Mg(2+) is bound at residue aspartate 185.

The protein belongs to the HAD-like hydrolase superfamily. MasA/MtnC family. Monomer. Mg(2+) serves as cofactor.

It localises to the cytoplasm. The protein resides in the nucleus. It catalyses the reaction 5-methylsulfanyl-2,3-dioxopentyl phosphate + H2O = 1,2-dihydroxy-5-(methylsulfanyl)pent-1-en-3-one + phosphate. The protein operates within amino-acid biosynthesis; L-methionine biosynthesis via salvage pathway; L-methionine from S-methyl-5-thio-alpha-D-ribose 1-phosphate: step 3/6. It participates in amino-acid biosynthesis; L-methionine biosynthesis via salvage pathway; L-methionine from S-methyl-5-thio-alpha-D-ribose 1-phosphate: step 4/6. In terms of biological role, bifunctional enzyme that catalyzes the enolization of 2,3-diketo-5-methylthiopentyl-1-phosphate (DK-MTP-1-P) into the intermediate 2-hydroxy-3-keto-5-methylthiopentenyl-1-phosphate (HK-MTPenyl-1-P), which is then dephosphorylated to form the acireductone 1,2-dihydroxy-3-keto-5-methylthiopentene (DHK-MTPene). The polypeptide is Enolase-phosphatase E1 (Zygosaccharomyces rouxii (strain ATCC 2623 / CBS 732 / NBRC 1130 / NCYC 568 / NRRL Y-229)).